Here is a 65-residue protein sequence, read N- to C-terminus: MLPPIRCFSCGKPLGHLWEEFNERVNKGEDPKKVLDDLGLERYCCRRTLLSAVVVFPVIAKFKKV.

Residues cysteine 7, cysteine 10, cysteine 44, and cysteine 45 each coordinate Zn(2+).

Belongs to the archaeal Rpo10/eukaryotic RPB10 RNA polymerase subunit family. Part of the RNA polymerase complex. Requires Zn(2+) as cofactor.

The protein resides in the cytoplasm. It carries out the reaction RNA(n) + a ribonucleoside 5'-triphosphate = RNA(n+1) + diphosphate. DNA-dependent RNA polymerase (RNAP) catalyzes the transcription of DNA into RNA using the four ribonucleoside triphosphates as substrates. In Nanoarchaeum equitans (strain Kin4-M), this protein is DNA-directed RNA polymerase subunit Rpo10.